The chain runs to 244 residues: Putative esophageal gland cell secretory protein 6 (244 aa).

The signal sequence occupies residues 1 to 22 (MDRRFTVFLVIALVTSIYEVLS). An intrachain disulfide couples Cys-88 to Cys-91.

The protein belongs to the SelWTH family. SELT subfamily.

This is Putative esophageal gland cell secretory protein 6 (HSP6) from Heterodera glycines (Soybean cyst nematode worm).